The following is a 312-amino-acid chain: MELEFLGTGAGVPARQRNVTSIALKLLDERNEVWLFDVGEATQHQILKTTLKPRKVKKIFLTHLHGDHLFGLPGFLSSRSFQGGDEPLTIYGPKGTEEYVRTSLKLSESHLTYALKFVVLPENGVIIDDKTFRVECAKLDHRIASYGFRIVEKDHPGELQVEKLQADGVPSGPVYARIKNGETVTLSDGREIDGRNYIGNAQKGRIVTIIGDTRNCEAITRLAENADVLVHESTFGKQEQKIARQYYHSTNINAAKVAKTAHVKRLLLTHISARYLGQAVRELQNDARDIFKNTRVVSDLDLYDIPFHGRKE.

Positions 63, 65, 67, 68, 141, 212, and 270 each coordinate Zn(2+). Asp67 functions as the Proton acceptor in the catalytic mechanism.

This sequence belongs to the RNase Z family. Homodimer. Zn(2+) is required as a cofactor.

The enzyme catalyses Endonucleolytic cleavage of RNA, removing extra 3' nucleotides from tRNA precursor, generating 3' termini of tRNAs. A 3'-hydroxy group is left at the tRNA terminus and a 5'-phosphoryl group is left at the trailer molecule.. In terms of biological role, zinc phosphodiesterase, which displays some tRNA 3'-processing endonuclease activity. Probably involved in tRNA maturation, by removing a 3'-trailer from precursor tRNA. The polypeptide is Ribonuclease Z (Latilactobacillus sakei subsp. sakei (strain 23K) (Lactobacillus sakei subsp. sakei)).